The following is a 121-amino-acid chain: Glycine cleavage system H protein (121 aa).

The Lipoyl-binding domain maps to 16-98 (VATVGITAYA…ESGGWFAKIK (83 aa)). An N6-lipoyllysine modification is found at Lys-57.

It belongs to the GcvH family. The glycine cleavage system is composed of four proteins: P, T, L and H. (R)-lipoate is required as a cofactor.

Functionally, the glycine cleavage system catalyzes the degradation of glycine. The H protein shuttles the methylamine group of glycine from the P protein to the T protein. The polypeptide is Glycine cleavage system H protein (Caulobacter vibrioides (strain NA1000 / CB15N) (Caulobacter crescentus)).